The primary structure comprises 253 residues: Hydroxyacylglutathione hydrolase (253 aa).

Positions 59, 61, 63, 64, 118, 143, and 181 each coordinate Zn(2+).

It belongs to the metallo-beta-lactamase superfamily. Glyoxalase II family. In terms of assembly, monomer. Requires Zn(2+) as cofactor.

It carries out the reaction an S-(2-hydroxyacyl)glutathione + H2O = a 2-hydroxy carboxylate + glutathione + H(+). It functions in the pathway secondary metabolite metabolism; methylglyoxal degradation; (R)-lactate from methylglyoxal: step 2/2. In terms of biological role, thiolesterase that catalyzes the hydrolysis of S-D-lactoyl-glutathione to form glutathione and D-lactic acid. This Prochlorococcus marinus (strain MIT 9211) protein is Hydroxyacylglutathione hydrolase.